A 292-amino-acid polypeptide reads, in one-letter code: GID complex substrate-recognition subunit 10 (292 aa).

It belongs to the GID4/VID24 family. Substrate-recognition component of the GID/CTLH ubiquitin ligase complex. In the absence of stress, the complex exists as an inactive anticipatory complex (GID(Ant)), composed of VID30/GID1, the E3 ubiquitin-ligase RMD5/GID2, VID28/GID5, GID8, and the RING-like subunit FYV10/GID9, awaiting a substrate receptor to form the active E3 ligase complex. When cells are shifted to glucose-containing medium, the substrate receptor VID24/GID4 is induced and becomes part of the complex, named GID(SR4). Under osmotic or heat stress, the substrate receptor GID10 is induced and becomes part of the complex, named GID(SR10). Interacts with proteins that have an N-terminal Pro/N-degron, including ART2.

Its function is as follows. Substrate-recognition component of the GID E3 ligase complex recruiting N termini and catalyzing ubiquitination of proteins targeted for degradation. GID E3 is regulated through assembly with interchangeable N-degron-binding substrate receptors induced by distinct environmental perturbations. Required for the adaptation to osmotic or heat stress. Required for the regulation of protein levels of the adapter protein ART2, a component of the ART-Rsp5 ubiquitin ligase pathway, part of the plasma membrane quality control. Specific for substrates with an N-terminal Pro (Pro/N-degron), including ART2. Has high affinity for the N-terminal sequence Pro-Tyr-Ile-Thr, and also recognizes nonproline residues such as Met-Tyr-Ile-Thr-Val or Val-Cys-Phe-His. The protein is GID complex substrate-recognition subunit 10 of Saccharomyces cerevisiae (strain ATCC 204508 / S288c) (Baker's yeast).